The following is a 284-amino-acid chain: uncharacterized protein (284 aa).

The 130-residue stretch at 4–133 (PLHLFWHRRD…AVHRQWDQLL (130 aa)) folds into the Photolyase/cryptochrome alpha/beta domain.

This is an uncharacterized protein from Synechococcus sp. (strain PCC 6716).